Reading from the N-terminus, the 502-residue chain is Tyrosine-protein kinase receptor old-1 (502 aa).

The first 19 residues, 1–19 (MKGTLIFVVFYSSYGFAHC), serve as a signal peptide directing secretion. Over 20-58 (NTILRSSSLSRNFEDSLRRIPRSTDKDETGFEDSNVQEV) the chain is Extracellular. Residues 59–79 (IFILLYCLFVALAILICGLII) traverse the membrane as a helical segment. The Cytoplasmic portion of the chain corresponds to 80–502 (FYNSRKRELR…WLSDEKHCDS (423 aa)). The disordered stretch occupies residues 99–140 (LLEPTSADHKRRNSSNIVPPEPTPYPITSGESDLRQTPSRLS). Residues 127 to 140 (SGESDLRQTPSRLS) show a composition bias toward polar residues. A Protein kinase domain is found at 175 to 473 (ISKGRPLGSG…ELKTTSNEYF (299 aa)). ATP-binding positions include 181–189 (LGSGEFGII) and lysine 213. The active-site Proton acceptor is the aspartate 321.

The protein belongs to the protein kinase superfamily. Tyr protein kinase family.

The protein resides in the cell membrane. It carries out the reaction L-tyrosyl-[protein] + ATP = O-phospho-L-tyrosyl-[protein] + ADP + H(+). Its function is as follows. Receptor tyrosine kinase which plays a role in promoting longevity and resistance to stresses including UV irradiation and high temperatures, probably downstream of daf-16. This chain is Tyrosine-protein kinase receptor old-1, found in Caenorhabditis elegans.